A 129-amino-acid polypeptide reads, in one-letter code: Mitochondrial pyruvate carrier 2 (129 aa).

At Ser2–Thr22 the chain is on the mitochondrial matrix side. A helical membrane pass occupies residues Val23–Phe39. The Mitochondrial intermembrane segment spans residues Ser40–Asn54. The helical transmembrane segment at Leu55–Ile71 threads the bilayer. The Mitochondrial matrix portion of the chain corresponds to Lys72–Arg74. The helical transmembrane segment at Asn75–Tyr91 threads the bilayer. The Mitochondrial intermembrane portion of the chain corresponds to Gln92–Arg129.

Belongs to the mitochondrial pyruvate carrier (MPC) (TC 2.A.105) family. In terms of assembly, the functional 150 kDa pyruvate import complex is a heteromer of MPC1 and either MPC2 or MPC3.

Its subcellular location is the mitochondrion. The protein resides in the mitochondrion inner membrane. It catalyses the reaction pyruvate(out) + H(+)(out) = pyruvate(in) + H(+)(in). Functionally, mediates the uptake of pyruvate into mitochondria. The protein is Mitochondrial pyruvate carrier 2 of Saccharomyces cerevisiae (strain ATCC 204508 / S288c) (Baker's yeast).